The following is a 498-amino-acid chain: ATP synthase subunit beta, chloroplastic (498 aa).

ATP is bound at residue 172-179 (GGAGVGKT).

It belongs to the ATPase alpha/beta chains family. As to quaternary structure, F-type ATPases have 2 components, CF(1) - the catalytic core - and CF(0) - the membrane proton channel. CF(1) has five subunits: alpha(3), beta(3), gamma(1), delta(1), epsilon(1). CF(0) has four main subunits: a(1), b(1), b'(1) and c(9-12).

Its subcellular location is the plastid. It localises to the chloroplast thylakoid membrane. It carries out the reaction ATP + H2O + 4 H(+)(in) = ADP + phosphate + 5 H(+)(out). Functionally, produces ATP from ADP in the presence of a proton gradient across the membrane. The catalytic sites are hosted primarily by the beta subunits. This chain is ATP synthase subunit beta, chloroplastic, found in Drimys granadensis.